A 212-amino-acid chain; its full sequence is MIGGIDEAGRGPVIGPMVIAIVVGESDDMIKIGVRDSKRLSPGAREAVYEKILRVAACVNYVVIEPAEIDAYVSRGMLNALELKYTAQLINLCPAEYYYVDSPDVNPKRYESGLVFATGKRVIALHKGEAVPQVAAASIVAKVVRDRLIQLLKKEVGDFGSGYPSDPRTLQRLREGRMPSECIRWQWKTVGGRIGLGRNRHESGENPGDSRG.

One can recognise an RNase H type-2 domain in the interval 1 to 199 (MIGGIDEAGR…VGGRIGLGRN (199 aa)). A divalent metal cation is bound by residues Asp-6, Glu-7, and Asp-101.

This sequence belongs to the RNase HII family. The cofactor is Mn(2+). Mg(2+) is required as a cofactor.

The protein resides in the cytoplasm. The catalysed reaction is Endonucleolytic cleavage to 5'-phosphomonoester.. Its function is as follows. Endonuclease that specifically degrades the RNA of RNA-DNA hybrids. This is Ribonuclease HII from Pyrobaculum aerophilum (strain ATCC 51768 / DSM 7523 / JCM 9630 / CIP 104966 / NBRC 100827 / IM2).